The sequence spans 358 residues: Probable RNA methyltransferase MXAN_6459 (358 aa).

Residue E92 is the Proton acceptor of the active site. The Radical SAM core domain maps to 99 to 327; the sequence is FDEKYVICVS…PVARRYSGGK (229 aa). Cysteines 106 and 333 form a disulfide. [4Fe-4S] cluster is bound by residues C113, C117, and C120. S-adenosyl-L-methionine-binding positions include 160 to 161, S192, 215 to 217, and D289; these read GE and SVT. Catalysis depends on C333, which acts as the S-methylcysteine intermediate.

It belongs to the radical SAM superfamily. RlmN family. Requires [4Fe-4S] cluster as cofactor.

The protein resides in the cytoplasm. The polypeptide is Probable RNA methyltransferase MXAN_6459 (Myxococcus xanthus (strain DK1622)).